We begin with the raw amino-acid sequence, 646 residues long: WW domain-containing adapter protein with coiled-coil (646 aa).

The interval 1-138 is disordered; the sequence is MVMYARKQQR…YDSADDWSEH (138 aa). Over residues 23–37 the composition is skewed to polar residues; that stretch reads QPFQALKYSSKSHPS. Positions 38–50 are enriched in basic and acidic residues; that stretch reads SGDHRHEKMRDAA. Serine 53 is subject to Phosphoserine. A compositionally biased stretch (polar residues) spans 61-75; it reads RSNSPENKYSDSTGH. Positions 103-122 are enriched in low complexity; it reads NHSALHSSNSHSSNPSNNPS. A WW domain is found at 129–162; that stretch reads YDSADDWSEHISSSGKKYYYNCRTEVSQWEKPKE. Phosphoserine is present on residues serine 131 and serine 142. 2 stretches are compositionally biased toward basic and acidic residues: residues 158-174 and 182-191; these read EKPKEWLEREQRQKEAN and PKDRDYRREV. Disordered regions lie at residues 158 to 352 and 428 to 541; these read EKPK…PQST and TQAQ…TATV. Positions 211 to 225 are enriched in polar residues; sequence DASSLLPQNILSQTS. Serine 225 bears the Phosphoserine mark. Residues 226–239 are compositionally biased toward basic and acidic residues; sequence RHNDKDYRLPRAET. The span at 252–267 shows a compositional bias: low complexity; that stretch reads PVVHPTATPSTVPSSP. Residues 284 to 300 show a composition bias toward polar residues; that stretch reads GASTLSKLPTPTASLPA. Threonine 293 bears the Phosphothreonine mark. Position 302 is an N6-acetyllysine (lysine 302). Residues 316 to 331 are compositionally biased toward polar residues; it reads SHSCTTPSTSSASGLN. Low complexity predominate over residues 332–351; that stretch reads PTSAPPTSASAVPVSPVPQS. The segment covering 428 to 463 has biased composition (polar residues); that stretch reads TQAQPSNQSPMSLTSDASSPRSYVSPRISTPQTNTV. The residue at position 446 (serine 446) is a Phosphoserine. The residue at position 471 (threonine 471) is a Phosphothreonine. The segment covering 490 to 503 has biased composition (polar residues); the sequence is VSHSATQQPVTADK. 3 positions are modified to phosphoserine: serine 511, serine 523, and serine 525. Over residues 511–524 the composition is skewed to low complexity; it reads SPRSLQRLSSQRSP. The span at 528–541 shows a compositional bias: polar residues; the sequence is PNHTCSSNASTATV. A coiled-coil region spans residues 617–643; that stretch reads QATLREQRILFLRQQIKELEKLKNQNS.

In terms of assembly, interacts (via coiled coil domain) with RNF20, RNF40 and UBE2A. Interacts (via WW domain) with RNA polymerase II. Interacts with MTOR and other components of the MTOR pathway including RPTOR, RUVBL1, RUVBL2, TTI1 and TTI2. Post-translationally, phosphorylated on tyrosine residues.

Its subcellular location is the nucleus speckle. The protein localises to the nucleus. In terms of biological role, acts as a linker between gene transcription and histone H2B monoubiquitination at 'Lys-120' (H2BK120ub1). Interacts with the RNA polymerase II transcriptional machinery via its WW domain and with RNF20-RNF40 via its coiled coil region, thereby linking and regulating H2BK120ub1 and gene transcription. Regulates the cell-cycle checkpoint activation in response to DNA damage. Positive regulator of amino acid starvation-induced autophagy. Also acts as a negative regulator of basal autophagy. Positively regulates MTOR activity by promoting, in an energy-dependent manner, the assembly of the TTT complex composed of TELO2, TTI1 and TTI2 and the RUVBL complex composed of RUVBL1 and RUVBL2 into the TTT-RUVBL complex. This leads to the dimerization of the mTORC1 complex and its subsequent activation. May negatively regulate the ubiquitin proteasome pathway. The polypeptide is WW domain-containing adapter protein with coiled-coil (Wac) (Mus musculus (Mouse)).